The following is an 86-amino-acid chain: Short neurotoxin homolog NTL4 (86 aa).

A signal peptide spans 1 to 21 (MKTLLLTLVVVTIICLDLGYT). 4 disulfide bridges follow: cysteine 24/cysteine 45, cysteine 38/cysteine 63, cysteine 67/cysteine 78, and cysteine 79/cysteine 84.

The protein belongs to the three-finger toxin family. Short-chain subfamily. Orphan group III sub-subfamily. In terms of tissue distribution, expressed by the venom gland.

The protein resides in the secreted. The protein is Short neurotoxin homolog NTL4 of Bungarus multicinctus (Many-banded krait).